Consider the following 263-residue polypeptide: Putative hydro-lyase Pden_0321 (263 aa).

Belongs to the D-glutamate cyclase family.

The polypeptide is Putative hydro-lyase Pden_0321 (Paracoccus denitrificans (strain Pd 1222)).